A 386-amino-acid chain; its full sequence is Methionine aminotransferase (386 aa).

An N6-(pyridoxal phosphate)lysine modification is found at K236.

This sequence belongs to the class-I pyridoxal-phosphate-dependent aminotransferase family. Homodimer. It depends on pyridoxal 5'-phosphate as a cofactor.

The protein resides in the cytoplasm. It carries out the reaction a 2-oxocarboxylate + L-methionine = 4-methylsulfanyl-2-oxobutanoate + an L-alpha-amino acid. Its function is as follows. Shows aminotransferase activity with methionine and histidine as substrates, and to a lesser extent also with phenylalanine. This Escherichia coli (strain K12) protein is Methionine aminotransferase (ybdL).